Reading from the N-terminus, the 430-residue chain is DNA damage-inducible protein DIN7 (430 aa).

Residues 1 to 96 form an N-domain region; that stretch reads MGIPGLLPQL…HTETRRRKKR (96 aa). 7 residues coordinate Mg(2+): D30, D78, E150, D152, D171, D173, and D227. The tract at residues 114–247 is I-domain; that stretch reads NAMEYFQKSV…VTAMKIVKRY (134 aa).

The protein belongs to the XPG/RAD2 endonuclease family. The cofactor is Mg(2+).

It is found in the nucleus. Its function is as follows. 5'-&gt;3' double-stranded DNA exonuclease. The protein is DNA damage-inducible protein DIN7 (DIN7) of Saccharomyces cerevisiae (strain ATCC 204508 / S288c) (Baker's yeast).